Reading from the N-terminus, the 482-residue chain is tRNA sulfurtransferase (482 aa).

The region spanning 61 to 165 (LAIRDALTRI…DDRLLLIKGR (105 aa)) is the THUMP domain. ATP-binding positions include 183 to 184 (LI), Lys265, Gly287, and Gln296. Residues Cys344 and Cys456 are joined by a disulfide bond. The Rhodanese domain occupies 404–482 (FGPNDVILDI…GFNNVKVYRP (79 aa)). The Cysteine persulfide intermediate role is filled by Cys456.

This sequence belongs to the ThiI family.

The protein resides in the cytoplasm. It catalyses the reaction [ThiI sulfur-carrier protein]-S-sulfanyl-L-cysteine + a uridine in tRNA + 2 reduced [2Fe-2S]-[ferredoxin] + ATP + H(+) = [ThiI sulfur-carrier protein]-L-cysteine + a 4-thiouridine in tRNA + 2 oxidized [2Fe-2S]-[ferredoxin] + AMP + diphosphate. It carries out the reaction [ThiS sulfur-carrier protein]-C-terminal Gly-Gly-AMP + S-sulfanyl-L-cysteinyl-[cysteine desulfurase] + AH2 = [ThiS sulfur-carrier protein]-C-terminal-Gly-aminoethanethioate + L-cysteinyl-[cysteine desulfurase] + A + AMP + 2 H(+). It functions in the pathway cofactor biosynthesis; thiamine diphosphate biosynthesis. Its function is as follows. Catalyzes the ATP-dependent transfer of a sulfur to tRNA to produce 4-thiouridine in position 8 of tRNAs, which functions as a near-UV photosensor. Also catalyzes the transfer of sulfur to the sulfur carrier protein ThiS, forming ThiS-thiocarboxylate. This is a step in the synthesis of thiazole, in the thiamine biosynthesis pathway. The sulfur is donated as persulfide by IscS. This is tRNA sulfurtransferase from Escherichia coli (strain ATCC 8739 / DSM 1576 / NBRC 3972 / NCIMB 8545 / WDCM 00012 / Crooks).